The chain runs to 387 residues: Alpha-sarcoglycan (387 aa).

The signal sequence occupies residues 1–24; sequence MAAAALLWLPLLVGCLAGPGGTEA. At 25-290 the chain is on the extracellular side; it reads QQTTLYPLVG…ATARDFLADA (266 aa). 2 N-linked (GlcNAc...) asparagine glycosylation sites follow: Asn174 and Asn246. Residues 291 to 311 traverse the membrane as a helical segment; it reads LVTLLVPLLVALLLALLLAYI. At 312–387 the chain is on the cytoplasmic side; sequence MCCRREGRLK…AQVPLILDQH (76 aa). Position 377 is a phosphoserine (Ser377).

The protein belongs to the sarcoglycan alpha/epsilon family. In terms of assembly, cross-link to form 2 major subcomplexes: one consisting of SGCB, SGCD and SGCG and the other consisting of SGCB and SGCD. The association between SGCB and SGCG is particularly strong while SGCA is loosely associated with the other sarcoglycans. Interacts with the syntrophin SNTA1.

The protein localises to the cell membrane. The protein resides in the sarcolemma. Its subcellular location is the cytoplasm. It localises to the cytoskeleton. Component of the sarcoglycan complex, a subcomplex of the dystrophin-glycoprotein complex which forms a link between the F-actin cytoskeleton and the extracellular matrix. This is Alpha-sarcoglycan (SGCA) from Oryctolagus cuniculus (Rabbit).